Here is a 389-residue protein sequence, read N- to C-terminus: snRNA-activating protein complex subunit 1 (389 aa).

Residues 1–15 (MGTPAGAGTRPTGAG) are compositionally biased toward low complexity. 3 disordered regions span residues 1–22 (MGTPAGAGTRPTGAGTVEGVGI), 245–276 (WHKERKNPSLKPKLKDGEENGEGSSEEPERCE), and 290–389 (SAVV…KRKC). The tract at residues 20 to 187 (VGIPPGLQTD…QKFKDPNDRV (168 aa)) is SNAPC3-binding. An SNAPC4-binding region spans residues 183 to 287 (PNDRVMKLIT…AVSLAKIKAK (105 aa)). The span at 245-262 (WHKERKNPSLKPKLKDGE) shows a compositional bias: basic and acidic residues. Phosphoserine occurs at positions 308 and 309.

Part of the SNAPc complex composed of 5 subunits: SNAPC1, SNAPC2, SNAPC3, SNAPC4 and SNAPC5. SNAPC1 interacts with SNAPC3, SNAPC4 and TBP.

It is found in the nucleus. Its function is as follows. Part of the SNAPc complex required for the transcription of both RNA polymerase II and III small-nuclear RNA genes. Binds to the proximal sequence element (PSE), a non-TATA-box basal promoter element common to these 2 types of genes. Recruits TBP and BRF2 to the U6 snRNA TATA box. This is snRNA-activating protein complex subunit 1 (Snapc1) from Mus musculus (Mouse).